A 186-amino-acid polypeptide reads, in one-letter code: Ribosome-recycling factor (186 aa).

Belongs to the RRF family.

The protein localises to the cytoplasm. Functionally, responsible for the release of ribosomes from messenger RNA at the termination of protein biosynthesis. May increase the efficiency of translation by recycling ribosomes from one round of translation to another. This Bartonella bacilliformis (strain ATCC 35685 / KC583 / Herrer 020/F12,63) protein is Ribosome-recycling factor.